A 221-amino-acid polypeptide reads, in one-letter code: Ribonuclease T (221 aa).

One can recognise an Exonuclease domain in the interval 20 to 194; that stretch reads VVIDIETAGF…YDTLQTANLF (175 aa). Positions 23, 25, 181, and 186 each coordinate Mg(2+). The Proton donor/acceptor role is filled by histidine 181.

This sequence belongs to the RNase T family. As to quaternary structure, homodimer. The cofactor is Mg(2+).

Its function is as follows. Trims short 3' overhangs of a variety of RNA species, leaving a one or two nucleotide 3' overhang. Responsible for the end-turnover of tRNA: specifically removes the terminal AMP residue from uncharged tRNA (tRNA-C-C-A). Also appears to be involved in tRNA biosynthesis. The protein is Ribonuclease T of Buchnera aphidicola subsp. Acyrthosiphon pisum (strain APS) (Acyrthosiphon pisum symbiotic bacterium).